The following is a 315-amino-acid chain: Coproporphyrin III ferrochelatase (315 aa).

Residues Y13, R30, 46–47, S54, and Y125 contribute to the Fe-coproporphyrin III site; that span reads RY. H183 and E264 together coordinate Fe(2+).

It belongs to the ferrochelatase family.

The protein resides in the cytoplasm. The enzyme catalyses Fe-coproporphyrin III + 2 H(+) = coproporphyrin III + Fe(2+). It functions in the pathway porphyrin-containing compound metabolism; protoheme biosynthesis. Functionally, involved in coproporphyrin-dependent heme b biosynthesis. Catalyzes the insertion of ferrous iron into coproporphyrin III to form Fe-coproporphyrin III. In Anoxybacillus flavithermus (strain DSM 21510 / WK1), this protein is Coproporphyrin III ferrochelatase.